Consider the following 530-residue polypeptide: Probable cytochrome P450 519A1 (530 aa).

Residues 1 to 21 (MESIINLIFYIIIFLILIDFL) form a helical membrane-spanning segment. Position 476 (C476) interacts with heme.

It belongs to the cytochrome P450 family. Heme serves as cofactor.

The protein localises to the membrane. This is Probable cytochrome P450 519A1 (cyp519A1) from Dictyostelium discoideum (Social amoeba).